The following is a 647-amino-acid chain: MAKIIGIDLGTTNSCVAVMENNKPKVIENAEGTRTTPSIVAYAEDNEVLVGASAKRQAVTNPENTLFAIKRLIGRKFDEEVVQKDISVTPYKIVRADNNDAWIEVRGRKIAPPEVSAQVLMKMKKTAEDYLGESVTEAVITVPAYFNDSQRQATKDAGRIAGLEVKRIINEPTAAALAFGMDKKEGDRKIAVYDLGGGTFDISIIEIAEIEGEHQFEVLATNGDTFLGGEDFDSSVISYLVEEFRKESGIDLKKDMLALQRLKDAAEKAKIELSSSQQTEVNLPYITADASGPKHLAVKITRAKLESLVEELIERTAGPCRTALKDAGLSVSDIDDVILVGGQTRMPKVQDKVKEIFGKEPRKDVNPDEAVAIGAAIQGGVLQGDVKDVLLLDVTPLSLGIETLGGVMTKLIQKNTTIPTKAQQIFSTAEDSQTAVTIHVLQGEREMASGNKSLGQFNLTDIPPAQRGMPQIEVTFDIDANGILHVSAKDKATGKENKIKIQASSGLSEDEIQKMVKDAETHAEEDKKALELVNSRNQCDAMIHSVKKSLTEYGDKLEADEKSKIEAALKDAEEALKSGDKEAIDAKTQVLTEASHKLAEKMYAQEQAQAGQQAGPGAGSASAGQSGEKPVEGEVVDAEFEEVKDKK.

Threonine 199 bears the Phosphothreonine; by autocatalysis mark. Residues 602–647 (MYAQEQAQAGQQAGPGAGSASAGQSGEKPVEGEVVDAEFEEVKDKK) are disordered. Residues 604 to 627 (AQEQAQAGQQAGPGAGSASAGQSG) are compositionally biased toward low complexity.

The protein belongs to the heat shock protein 70 family.

Functionally, acts as a chaperone. This is Chaperone protein DnaK from Nitrosomonas eutropha (strain DSM 101675 / C91 / Nm57).